The following is a 100-amino-acid chain: Urease subunit gamma (100 aa).

Belongs to the urease gamma subunit family. As to quaternary structure, heterotrimer of UreA (gamma), UreB (beta) and UreC (alpha) subunits. Three heterotrimers associate to form the active enzyme.

The protein localises to the cytoplasm. It catalyses the reaction urea + 2 H2O + H(+) = hydrogencarbonate + 2 NH4(+). It participates in nitrogen metabolism; urea degradation; CO(2) and NH(3) from urea (urease route): step 1/1. The sequence is that of Urease subunit gamma from Corynebacterium urealyticum (strain ATCC 43042 / DSM 7109).